We begin with the raw amino-acid sequence, 114 residues long: Large ribosomal subunit protein uL22 (114 aa).

It belongs to the universal ribosomal protein uL22 family. Part of the 50S ribosomal subunit.

Its function is as follows. This protein binds specifically to 23S rRNA; its binding is stimulated by other ribosomal proteins, e.g. L4, L17, and L20. It is important during the early stages of 50S assembly. It makes multiple contacts with different domains of the 23S rRNA in the assembled 50S subunit and ribosome. In terms of biological role, the globular domain of the protein is located near the polypeptide exit tunnel on the outside of the subunit, while an extended beta-hairpin is found that lines the wall of the exit tunnel in the center of the 70S ribosome. This Ehrlichia chaffeensis (strain ATCC CRL-10679 / Arkansas) protein is Large ribosomal subunit protein uL22.